A 575-amino-acid chain; its full sequence is Delta-selinene-like synthase, chloroplastic (575 aa).

The (2E,6E)-farnesyl diphosphate site is built by R288, D325, D329, R466, and D469. 2 residues coordinate Mg(2+): D325 and D329. The short motif at 325-329 is the DDXXD motif element; it reads DDLYD. Mg(2+)-binding residues include D469 and E477.

This sequence belongs to the terpene synthase family. Tpsb subfamily. Monomer. Mg(2+) serves as cofactor. Requires Mn(2+) as cofactor.

The protein localises to the plastid. The protein resides in the chloroplast. The catalysed reaction is (2E,6E)-farnesyl diphosphate = (+)-delta-selinene + diphosphate. It participates in secondary metabolite biosynthesis; terpenoid biosynthesis. Its pathway is terpene metabolism; oleoresin biosynthesis. Its function is as follows. Sesquiterpene synthase (sesqui-TPS) involved in the biosynthesis of sesquiterpene natural products. Catalyzes the conversion of (2E)-geranyl diphosphate (GPP) into delta-selinene. The protein is Delta-selinene-like synthase, chloroplastic of Picea sitchensis (Sitka spruce).